The chain runs to 90 residues: Cell division topological specificity factor 2 (90 aa).

Belongs to the MinE family.

In terms of biological role, prevents the cell division inhibition by proteins MinC and MinD at internal division sites while permitting inhibition at polar sites. This ensures cell division at the proper site by restricting the formation of a division septum at the midpoint of the long axis of the cell. The polypeptide is Cell division topological specificity factor 2 (Syntrophomonas wolfei subsp. wolfei (strain DSM 2245B / Goettingen)).